The primary structure comprises 105 residues: Met repressor (105 aa).

The protein belongs to the MetJ family. In terms of assembly, homodimer.

The protein localises to the cytoplasm. Its function is as follows. This regulatory protein, when combined with SAM (S-adenosylmethionine) represses the expression of the methionine regulon and of enzymes involved in SAM synthesis. The sequence is that of Met repressor from Yersinia enterocolitica serotype O:8 / biotype 1B (strain NCTC 13174 / 8081).